The sequence spans 131 residues: Photosystem II extrinsic protein U (131 aa).

A signal peptide spans 1–28; the sequence is MKFISRLLVACSLLIGLMGFLGADLAQA. Residues 29–36 constitute a propeptide that is removed on maturation; it reads LTPNPILA.

Belongs to the PsbU family. In terms of assembly, PSII is composed of 1 copy each of membrane proteins PsbA, PsbB, PsbC, PsbD, PsbE, PsbF, PsbH, PsbI, PsbJ, PsbK, PsbL, PsbM, PsbT, PsbX, PsbY, PsbZ, Psb30/Ycf12, peripheral proteins PsbO, CyanoQ (PsbQ), PsbU, PsbV and a large number of cofactors. It forms dimeric complexes.

It is found in the cellular thylakoid membrane. Functionally, one of the extrinsic, lumenal subunits of photosystem II (PSII). PSII is a light-driven water plastoquinone oxidoreductase, using light energy to abstract electrons from H(2)O, generating a proton gradient subsequently used for ATP formation. The extrinsic proteins stabilize the structure of photosystem II oxygen-evolving complex (OEC), the ion environment of oxygen evolution and protect the OEC against heat-induced inactivation. May modulate the Cl(-) requirement for oxygen evolution. The protein is Photosystem II extrinsic protein U of Synechocystis sp. (strain ATCC 27184 / PCC 6803 / Kazusa).